The sequence spans 353 residues: Nuclear hormone receptor family member nhr-27 (353 aa).

The segment at residues 24–102 (VSNCVVCGRL…KGMLDLSRYT (79 aa)) is a DNA-binding region (nuclear receptor). 2 NR C4-type zinc fingers span residues 27–47 (CVVC…CSAC) and 64–85 (CKYS…CKFC). Positions 119-351 (ETLFLTMTVS…SQVHQDVIEF (233 aa)) constitute an NR LBD domain. The AF-2 stretch occupies residues 340-351 (QPSQVHQDVIEF).

The protein belongs to the nuclear hormone receptor family.

It localises to the nucleus. Ligand-activated transcription factor. Involved in lifespan extension in a manner dependent upon mitochondrial function. The chain is Nuclear hormone receptor family member nhr-27 from Caenorhabditis elegans.